A 145-amino-acid polypeptide reads, in one-letter code: Peptide methionine sulfoxide reductase MsrB (145 aa).

The MsrB domain occupies 4-127 (KEELRQRIGD…NSAALKFIPY (124 aa)). Residue Cys116 is the Nucleophile of the active site.

The protein belongs to the MsrB Met sulfoxide reductase family.

The catalysed reaction is L-methionyl-[protein] + [thioredoxin]-disulfide + H2O = L-methionyl-(R)-S-oxide-[protein] + [thioredoxin]-dithiol. The polypeptide is Peptide methionine sulfoxide reductase MsrB (Streptococcus equi subsp. zooepidemicus (strain H70)).